The primary structure comprises 461 residues: Putative cytochrome P450 132 (461 aa).

Cysteine 409 lines the heme pocket.

It belongs to the cytochrome P450 family. Heme serves as cofactor.

The polypeptide is Putative cytochrome P450 132 (cyp132) (Mycobacterium tuberculosis (strain ATCC 25618 / H37Rv)).